The following is a 462-amino-acid chain: MGKEKTHINIVVIGHVDSGKSTTTGHLIYKCGGIDKRTIEKFEKEAAEMGKGSFKYAWVLDKLKAERERGITIDISLWKFETSKYYVTIIDAPGHRDFIKNMITGTSQADCAVLIVAAGVGEFEAGISKNGQTREHALLAYTLGVKQLIVGVNKMDSTEPPYSQKRYEEIVKEVSTYIKKIGYNPDTVAFVPISGWNGDNMLEPSANMPWFKGWKVTRKDGNASGTTLLEALDCILPPTRPTDKPLRLPLQDVYKIGGIGTVPVGRVETGVLKPGMVVTFAPVNVTTEVKSVEMHHEALSEALPGDNVGFNVKNVSVKDVRRGNVAGDSKNDPPMEAAGFTAQVIILNHPGQISAGYAPVLDCHTAHIACKFAELKEKIDRRSGKKLEDGPKFLKSGDAAIVDMVPGKPMCVESFSDYPPLGRFAVRDMRQTVAVGVIKAVDKKAAGAGKVTKSAQKAQKAK.

Gly2 carries the n,N,N-trimethylglycine modification. The tr-type G domain occupies 5–242 (KTHINIVVIG…DCILPPTRPT (238 aa)). Residues 14-21 (GHVDSGKS) are G1. 14–21 (GHVDSGKS) is a binding site for GTP. Lys36 carries the N6,N6,N6-trimethyllysine; alternate modification. Lys36 is subject to N6,N6-dimethyllysine; alternate. Lys36 is subject to N6-methyllysine; alternate. Lys55 is subject to N6,N6-dimethyllysine. Residues 70-74 (GITID) are G2. An N6,N6,N6-trimethyllysine; by EEF1AKMT1 modification is found at Lys79. A G3 region spans residues 91 to 94 (DAPG). Position 153–156 (153–156 (NKMD)) interacts with GTP. Residues 153 to 156 (NKMD) are G4. N6,N6,N6-trimethyllysine; alternate; by EEF1AKMT3 is present on Lys165. N6,N6-dimethyllysine; alternate; by EEF1AKMT3 is present on Lys165. Lys165 carries the post-translational modification N6-acetyllysine; alternate. N6-methyllysine; alternate; by EEF1AKMT3 is present on Lys165. Lys172 carries the N6-acetyllysine modification. 194 to 196 (SGW) contributes to the GTP binding site. Residues 194–196 (SGW) are G5. Residue Lys273 is modified to N6-acetyllysine. Ser300 carries the phosphoserine; by TGFBR1 modification. The residue at position 301 (Glu301) is a 5-glutamyl glycerylphosphorylethanolamine. At Lys318 the chain carries N6,N6,N6-trimethyllysine; by EEF1AKMT2. Glu374 is modified (5-glutamyl glycerylphosphorylethanolamine). Lys385 is covalently cross-linked (Glycyl lysine isopeptide (Lys-Gly) (interchain with G-Cter in ubiquitin)). N6-acetyllysine; alternate is present on Lys392. N6-succinyllysine; alternate is present on Lys392. Residue Thr432 is modified to Phosphothreonine; by PASK. Position 439 is an N6-acetyllysine (Lys439).

The protein belongs to the TRAFAC class translation factor GTPase superfamily. Classic translation factor GTPase family. EF-Tu/EF-1A subfamily. As to quaternary structure, found in a nuclear export complex with XPO5, EEF1A1, Ran and aminoacylated tRNA. Interacts with PARP1 and TXK. Interacts with KARS1. May interact with ERGIC2. Interacts with IFIT1 (via TPR repeats 4-7). Interacts with DLC1, facilitating distribution to the membrane periphery and ruffles upon growth factor stimulation. Interacts with ZPR1; the interaction occurs in a epidermal growth factor (EGF)-dependent manner. Interacts with PPP1R16B. Interacts with SPHK1 and SPHK2; both interactions increase SPHK1 and SPHK2 kinase activity. Interacts with guanyl-nucleotide exchange factor EEF1B2. Interacts (via middle-region) with HTATIP2 (via N-terminus); the interaction is direct and competes with EEF1A1 binding to guanyl-nucleotide exchange factor EEF1B2, thereby inhibiting GDP for GTP exchange and reactivation of EEF1A1. Interacts with tRNA. ISGylated. In terms of processing, phosphorylated by TXK. Phosphorylation by PASK increases translation efficiency. Phosphorylated by ROCK2. Phosphorylation by TGFBR1 inhibits translation elongation. Post-translationally, trimethylated at Lys-79 by EEF1AKMT1. Methylated at Lys-165 by EEF1AKMT3, methylation by EEF1AKMT3 is dynamic as well as inducible by stress conditions, such as ER-stress, and plays a regulatory role on mRNA translation. Trimethylated at Lys-318 by EEF1AKMT2. Mono-, di-, and trimethylated at Lys-36 by EEF1AKMT4; trimethylated form is predominant. Methylation by EEF1AKMT4 contributes to the fine-tuning of translation rates for a subset of tRNAs. Trimethylated at Gly-2 by METTL13. Mono- and dimethylated at Lys-55 by METTL13; dimethylated form is predominant. Ubiquitinated at Lys-385 by RNF14 in response to ribosome collisions (ribosome stalling), leading to its degradation by the proteasome and rescue of stalled ribosomes.

It localises to the cytoplasm. The protein localises to the nucleus. The protein resides in the nucleolus. It is found in the cell membrane. It catalyses the reaction GTP + H2O = GDP + phosphate + H(+). In terms of biological role, translation elongation factor that catalyzes the GTP-dependent binding of aminoacyl-tRNA (aa-tRNA) to the A-site of ribosomes during the elongation phase of protein synthesis. Base pairing between the mRNA codon and the aa-tRNA anticodon promotes GTP hydrolysis, releasing the aa-tRNA from EEF1A1 and allowing its accommodation into the ribosome. The growing protein chain is subsequently transferred from the P-site peptidyl tRNA to the A-site aa-tRNA, extending it by one amino acid through ribosome-catalyzed peptide bond formation. Also plays a role in the positive regulation of IFNG transcription in T-helper 1 cells as part of an IFNG promoter-binding complex with TXK and PARP1. Also plays a role in cytoskeleton organization by promoting actin bundling. In Bos taurus (Bovine), this protein is Elongation factor 1-alpha 1 (EEF1A1).